The sequence spans 393 residues: uncharacterized protein (393 aa).

The disordered stretch occupies residues Ala-164–Glu-183. Positions Ser-173 to Glu-183 are enriched in polar residues.

This is an uncharacterized protein from Treponema pallidum (strain Nichols).